Reading from the N-terminus, the 124-residue chain is Small ribosomal subunit protein uS12 (124 aa).

A 3-methylthioaspartic acid modification is found at D89.

Belongs to the universal ribosomal protein uS12 family. As to quaternary structure, part of the 30S ribosomal subunit. Contacts proteins S8 and S17. May interact with IF1 in the 30S initiation complex.

With S4 and S5 plays an important role in translational accuracy. In terms of biological role, interacts with and stabilizes bases of the 16S rRNA that are involved in tRNA selection in the A site and with the mRNA backbone. Located at the interface of the 30S and 50S subunits, it traverses the body of the 30S subunit contacting proteins on the other side and probably holding the rRNA structure together. The combined cluster of proteins S8, S12 and S17 appears to hold together the shoulder and platform of the 30S subunit. The chain is Small ribosomal subunit protein uS12 from Tolumonas auensis (strain DSM 9187 / NBRC 110442 / TA 4).